The sequence spans 313 residues: L-lactate dehydrogenase (313 aa).

NAD(+)-binding positions include Val11, Asp32, Arg37, Tyr62, and 76 to 77 (GV). Residues Gln79, Arg85, and 117–120 (NPVD) contribute to the substrate site. Residues 115–117 (ASN) and Ser143 each bind NAD(+). Substrate is bound at residue 148-151 (DTAR). The beta-D-fructose 1,6-bisphosphate site is built by Arg153 and His168. His175 (proton acceptor) is an active-site residue. Position 221 is a phosphotyrosine (Tyr221). Thr230 is a substrate binding site.

Belongs to the LDH/MDH superfamily. LDH family. In terms of assembly, homotetramer.

It is found in the cytoplasm. It carries out the reaction (S)-lactate + NAD(+) = pyruvate + NADH + H(+). It participates in fermentation; pyruvate fermentation to lactate; (S)-lactate from pyruvate: step 1/1. Its activity is regulated as follows. Allosterically activated by fructose 1,6-bisphosphate (FBP). Catalyzes the conversion of lactate to pyruvate. The chain is L-lactate dehydrogenase from Geotalea daltonii (strain DSM 22248 / JCM 15807 / FRC-32) (Geobacter daltonii).